A 410-amino-acid polypeptide reads, in one-letter code: Tegument protein VP16 homolog (410 aa).

The disordered stretch occupies residues 388–410 (PPSPSEILPGDPPRPPTCGFLTR).

The protein belongs to the herpesviridae tegument protein VP16 protein family. As to quaternary structure, associates with the VP16-induced complex; binding to host HCFC1 activates VP16 for association with the octamer motif-binding host protein POU2F1, to form a multiprotein-DNA complex responsible for activating transcription of the viral immediate early genes.

Its subcellular location is the virion tegument. It is found in the host nucleus. Transcriptional activator of immediate-early (IE) gene products (alpha genes). Acts as a key activator of lytic infection by initiating the lytic program through the assembly of the transcriptional regulatory VP16-induced complex composed of VP16 and two cellular factors, HCFC1 and POU2F1. VP16-induced complex represents a regulatory switch: when it is on, it promotes IE-gene expression and thus lytic infection, and when it is off, it limits IE-gene transcription favoring latent infection. Functionally, may play a role in the aggregation of tegument proteins around nucleocapsids during virus morphogenesis. This is Tegument protein VP16 homolog from Varicella-zoster virus (strain Dumas) (HHV-3).